Reading from the N-terminus, the 500-residue chain is Proline--tRNA ligase (500 aa).

The protein belongs to the class-II aminoacyl-tRNA synthetase family. ProS type 3 subfamily. As to quaternary structure, homodimer.

The protein localises to the cytoplasm. It carries out the reaction tRNA(Pro) + L-proline + ATP = L-prolyl-tRNA(Pro) + AMP + diphosphate. In terms of biological role, catalyzes the attachment of proline to tRNA(Pro) in a two-step reaction: proline is first activated by ATP to form Pro-AMP and then transferred to the acceptor end of tRNA(Pro). The chain is Proline--tRNA ligase from Paramagnetospirillum magneticum (strain ATCC 700264 / AMB-1) (Magnetospirillum magneticum).